An 826-amino-acid chain; its full sequence is Ferric-pyoverdine M114 receptor PbuA (826 aa).

A signal peptide spans 1–44 (MSASRFMLRPLTRALLMHGATRTRLAGTGLGLALTLTAAPYVQA). The TonB box signature appears at 110–119 (DGNTVTVLGP). The TBDR plug domain occupies 160–271 (SLKETPQSVT…TAGGVNFVRK (112 aa)). The TBDR beta-barrel domain maps to 276 to 826 (TAHTQLSLSA…NFVMSVKADF (551 aa)). The short motif at 809–826 (GNFYGDPRNFVMSVKADF) is the TonB C-terminal box element.

This sequence belongs to the TonB-dependent receptor family.

It is found in the cell outer membrane. Its function is as follows. Specific receptor for the siderophore ferric pyoverdine (pseudobactin) M114. This chain is Ferric-pyoverdine M114 receptor PbuA (pbuA), found in Pseudomonas sp. (strain M114).